Consider the following 428-residue polypeptide: 4-hydroxy-3-methylbut-2-en-1-yl diphosphate synthase (flavodoxin) (428 aa).

Positions 315, 318, 361, and 368 each coordinate [4Fe-4S] cluster.

This sequence belongs to the IspG family. The cofactor is [4Fe-4S] cluster.

It catalyses the reaction (2E)-4-hydroxy-3-methylbut-2-enyl diphosphate + oxidized [flavodoxin] + H2O + 2 H(+) = 2-C-methyl-D-erythritol 2,4-cyclic diphosphate + reduced [flavodoxin]. The protein operates within isoprenoid biosynthesis; isopentenyl diphosphate biosynthesis via DXP pathway; isopentenyl diphosphate from 1-deoxy-D-xylulose 5-phosphate: step 5/6. Its function is as follows. Converts 2C-methyl-D-erythritol 2,4-cyclodiphosphate (ME-2,4cPP) into 1-hydroxy-2-methyl-2-(E)-butenyl 4-diphosphate. The chain is 4-hydroxy-3-methylbut-2-en-1-yl diphosphate synthase (flavodoxin) from Ralstonia pickettii (strain 12J).